The sequence spans 660 residues: Elongation factor 4 (660 aa).

Positions 55–241 (AQIRNFCIIA…EVVRQVPPPQ (187 aa)) constitute a tr-type G domain. GTP is bound by residues 67–72 (DHGKST) and 188–191 (NKID).

This sequence belongs to the TRAFAC class translation factor GTPase superfamily. Classic translation factor GTPase family. LepA subfamily.

The protein localises to the cell membrane. It carries out the reaction GTP + H2O = GDP + phosphate + H(+). Functionally, required for accurate and efficient protein synthesis under certain stress conditions. May act as a fidelity factor of the translation reaction, by catalyzing a one-codon backward translocation of tRNAs on improperly translocated ribosomes. Back-translocation proceeds from a post-translocation (POST) complex to a pre-translocation (PRE) complex, thus giving elongation factor G a second chance to translocate the tRNAs correctly. Binds to ribosomes in a GTP-dependent manner. This chain is Elongation factor 4, found in Mycolicibacterium paratuberculosis (strain ATCC BAA-968 / K-10) (Mycobacterium paratuberculosis).